The primary structure comprises 318 residues: Ribose-phosphate pyrophosphokinase 2 (318 aa).

96–101 (RQDKKD) contributes to the ATP binding site. Mg(2+) is bound by residues aspartate 128, histidine 130, aspartate 139, and aspartate 143. Histidine 130 serves as a coordination point for ATP. Residues 212-227 (KDRVAILVDDMADTCG) form a binding of phosphoribosylpyrophosphate region.

It belongs to the ribose-phosphate pyrophosphokinase family. Homodimer. The active form is probably a hexamer composed of 3 homodimers. The cofactor is Mg(2+).

The catalysed reaction is D-ribose 5-phosphate + ATP = 5-phospho-alpha-D-ribose 1-diphosphate + AMP + H(+). It functions in the pathway metabolic intermediate biosynthesis; 5-phospho-alpha-D-ribose 1-diphosphate biosynthesis; 5-phospho-alpha-D-ribose 1-diphosphate from D-ribose 5-phosphate (route I): step 1/1. Its activity is regulated as follows. Activated by magnesium and inorganic phosphate. Competitively or non-competitively inhibited by ADP, 2,3-bisphosphoglyceride or GDP. In terms of biological role, catalyzes the synthesis of phosphoribosylpyrophosphate (PRPP) that is essential for nucleotide synthesis. The sequence is that of Ribose-phosphate pyrophosphokinase 2 (prps2) from Xenopus tropicalis (Western clawed frog).